We begin with the raw amino-acid sequence, 573 residues long: Probable cytochrome c oxidase subunit 1 (573 aa).

The chain crosses the membrane as a helical span at residues 40-60 (IGIMYCVACISFFFIGGLLAL). Histidine 86 provides a ligand contact to Fe(II)-heme a. Transmembrane regions (helical) follow at residues 89 to 109 (IMLL…VLPL), 121 to 141 (LNAF…AGFI), 170 to 190 (LWIM…VNMI), 213 to 233 (IMVT…ALFG), 258 to 278 (LFWF…FGIV), and 290 to 310 (IFGY…SVAV). Cu cation-binding residues include histidine 264 and tyrosine 268. A cross-link (1'-histidyl-3'-tyrosine (His-Tyr)) is located at residues 264-268 (HPEVY). Residues histidine 313 and histidine 314 each coordinate Cu cation. The next 2 membrane-spanning stretches (helical) occupy residues 315 to 335 (MFAT…LIAV) and 359 to 379 (MLFS…GVLL). Histidine 397 serves as a coordination point for heme a3. The next 3 helical transmembrane spans lie at 398 to 418 (FHYV…YFWF), 433 to 453 (LHFW…HWLG), and 476 to 496 (VSTI…WNVF). Residue histidine 399 participates in Fe(II)-heme a binding.

This sequence belongs to the heme-copper respiratory oxidase family.

Its subcellular location is the cell membrane. It carries out the reaction 4 Fe(II)-[cytochrome c] + O2 + 8 H(+)(in) = 4 Fe(III)-[cytochrome c] + 2 H2O + 4 H(+)(out). Its pathway is energy metabolism; oxidative phosphorylation. Functionally, cytochrome c oxidase is the component of the respiratory chain that catalyzes the reduction of oxygen to water. Subunits 1-3 form the functional core of the enzyme complex. CO I is the catalytic subunit of the enzyme. Electrons originating in cytochrome c are transferred via the copper A center of subunit 2 and heme A of subunit 1 to the bimetallic center formed by heme A3 and copper B. This Mycobacterium bovis (strain ATCC BAA-935 / AF2122/97) protein is Probable cytochrome c oxidase subunit 1 (ctaD).